Reading from the N-terminus, the 74-residue chain is Acyl carrier protein (74 aa).

Residues Met1–Ser74 form the Carrier domain. Ser34 is subject to O-(pantetheine 4'-phosphoryl)serine.

The protein belongs to the acyl carrier protein (ACP) family. Post-translationally, 4'-phosphopantetheine is transferred from CoA to a specific serine of apo-ACP by AcpS. This modification is essential for activity because fatty acids are bound in thioester linkage to the sulfhydryl of the prosthetic group.

The protein localises to the cytoplasm. It participates in lipid metabolism; fatty acid biosynthesis. Carrier of the growing fatty acid chain in fatty acid biosynthesis. This Acetivibrio thermocellus (strain ATCC 27405 / DSM 1237 / JCM 9322 / NBRC 103400 / NCIMB 10682 / NRRL B-4536 / VPI 7372) (Clostridium thermocellum) protein is Acyl carrier protein.